Here is a 291-residue protein sequence, read N- to C-terminus: 33 kDa chaperonin (291 aa).

2 disulfide bridges follow: cysteine 235-cysteine 237 and cysteine 268-cysteine 271.

It belongs to the HSP33 family. Under oxidizing conditions two disulfide bonds are formed involving the reactive cysteines. Under reducing conditions zinc is bound to the reactive cysteines and the protein is inactive.

Its subcellular location is the cytoplasm. Redox regulated molecular chaperone. Protects both thermally unfolding and oxidatively damaged proteins from irreversible aggregation. Plays an important role in the bacterial defense system toward oxidative stress. In Bacillus subtilis (strain 168), this protein is 33 kDa chaperonin.